The chain runs to 210 residues: Inner membrane-spanning protein YciB (210 aa).

6 helical membrane-spanning segments follow: residues 12-32 (EVSP…FFFA), 53-73 (IFIA…VSWM), 78-98 (LPMM…LTLW), 115-135 (LFGA…GYVF), 153-173 (WGVF…SFST), and 175-195 (FWVA…TLAQ).

Belongs to the YciB family.

It is found in the cell inner membrane. Functionally, plays a role in cell envelope biogenesis, maintenance of cell envelope integrity and membrane homeostasis. This is Inner membrane-spanning protein YciB from Sinorhizobium medicae (strain WSM419) (Ensifer medicae).